A 207-amino-acid chain; its full sequence is FMN-dependent NADH:quinone oxidoreductase 2 (207 aa).

FMN contacts are provided by residues serine 9, 15 to 17 (SAS), and 97 to 100 (MWNF).

Belongs to the azoreductase type 1 family. Homodimer. It depends on FMN as a cofactor.

The catalysed reaction is 2 a quinone + NADH + H(+) = 2 a 1,4-benzosemiquinone + NAD(+). The enzyme catalyses N,N-dimethyl-1,4-phenylenediamine + anthranilate + 2 NAD(+) = 2-(4-dimethylaminophenyl)diazenylbenzoate + 2 NADH + 2 H(+). Its function is as follows. Quinone reductase that provides resistance to thiol-specific stress caused by electrophilic quinones. Also exhibits azoreductase activity. Catalyzes the reductive cleavage of the azo bond in aromatic azo compounds to the corresponding amines. In Burkholderia lata (strain ATCC 17760 / DSM 23089 / LMG 22485 / NCIMB 9086 / R18194 / 383), this protein is FMN-dependent NADH:quinone oxidoreductase 2.